Reading from the N-terminus, the 439-residue chain is DNA primase DnaG (439 aa).

The 75-residue stretch at 169-243 (DSIIVVEGRA…DIDYVARAPY (75 aa)) folds into the Toprim domain. Residues E175, D217, and D219 each coordinate Mg(2+).

It belongs to the archaeal DnaG primase family. In terms of assembly, forms a ternary complex with MCM helicase and DNA. Mg(2+) serves as cofactor.

It carries out the reaction ssDNA + n NTP = ssDNA/pppN(pN)n-1 hybrid + (n-1) diphosphate.. Functionally, RNA polymerase that catalyzes the synthesis of short RNA molecules used as primers for DNA polymerase during DNA replication. The protein is DNA primase DnaG of Methanococcus maripaludis (strain C7 / ATCC BAA-1331).